We begin with the raw amino-acid sequence, 679 residues long: DNA-directed RNA polymerase subunit beta' (679 aa).

4 residues coordinate Zn(2+): Cys-69, Cys-71, Cys-87, and Cys-90. Mg(2+) contacts are provided by Asp-489, Asp-491, and Asp-493.

It belongs to the RNA polymerase beta' chain family. RpoC1 subfamily. In plastids the minimal PEP RNA polymerase catalytic core is composed of four subunits: alpha, beta, beta', and beta''. When a (nuclear-encoded) sigma factor is associated with the core the holoenzyme is formed, which can initiate transcription. The cofactor is Mg(2+). Zn(2+) serves as cofactor.

The protein resides in the plastid. It is found in the chloroplast. It catalyses the reaction RNA(n) + a ribonucleoside 5'-triphosphate = RNA(n+1) + diphosphate. In terms of biological role, DNA-dependent RNA polymerase catalyzes the transcription of DNA into RNA using the four ribonucleoside triphosphates as substrates. The chain is DNA-directed RNA polymerase subunit beta' from Oenothera argillicola (Appalachian evening primrose).